The sequence spans 283 residues: Phytanoyl-CoA dioxygenase (283 aa).

2-oxoglutarate-binding positions include lysine 99, methionine 138, 153-155 (HQD), and tryptophan 170. The Fe cation site is built by histidine 153 and aspartate 155. Residue histidine 238 participates in Fe cation binding. 2-oxoglutarate is bound by residues serine 240 and arginine 249.

It belongs to the PhyH family. Fe cation serves as cofactor. The cofactor is L-ascorbate.

It catalyses the reaction phytanoyl-CoA + 2-oxoglutarate + O2 = 2-hydroxyphytanoyl-CoA + succinate + CO2. It functions in the pathway lipid metabolism; fatty acid metabolism. Functionally, converts phytanoyl-CoA to 2-hydroxyphytanoyl-CoA. The sequence is that of Phytanoyl-CoA dioxygenase from Arabidopsis thaliana (Mouse-ear cress).